Reading from the N-terminus, the 598-residue chain is Glutamine--fructose-6-phosphate aminotransferase [isomerizing] (598 aa).

Cys2 (nucleophile; for GATase activity) is an active-site residue. The Glutamine amidotransferase type-2 domain maps to Cys2 to Asp218. 2 consecutive SIS domains span residues Val277 to Leu421 and Leu450 to Pro588. The active-site For Fru-6P isomerization activity is Lys593.

As to quaternary structure, homodimer.

It is found in the cytoplasm. It carries out the reaction D-fructose 6-phosphate + L-glutamine = D-glucosamine 6-phosphate + L-glutamate. In terms of biological role, catalyzes the first step in hexosamine metabolism, converting fructose-6P into glucosamine-6P using glutamine as a nitrogen source. The protein is Glutamine--fructose-6-phosphate aminotransferase [isomerizing] of Campylobacter jejuni subsp. jejuni serotype O:2 (strain ATCC 700819 / NCTC 11168).